Reading from the N-terminus, the 284-residue chain is RNase adapter protein RapZ (284 aa).

ATP is bound at residue 8-15; sequence GRSGSGKS. Residue 56–59 participates in GTP binding; sequence DVRN. The segment at 266 to 284 is RNA-binding; sequence RSRGKNVQSRHRTLEKRKT.

It belongs to the RapZ-like family. RapZ subfamily. As to quaternary structure, homotrimer.

Its function is as follows. Modulates the synthesis of GlmS, by affecting the processing and stability of the regulatory small RNA GlmZ. When glucosamine-6-phosphate (GlcN6P) concentrations are high in the cell, RapZ binds GlmZ and targets it to cleavage by RNase E. Consequently, GlmZ is inactivated and unable to activate GlmS synthesis. Under low GlcN6P concentrations, RapZ is sequestered and inactivated by an other regulatory small RNA, GlmY, preventing GlmZ degradation and leading to synthesis of GlmS. This Salmonella arizonae (strain ATCC BAA-731 / CDC346-86 / RSK2980) protein is RNase adapter protein RapZ.